The following is a 113-amino-acid chain: Ribosome-binding factor A (113 aa).

It belongs to the RbfA family. As to quaternary structure, monomer. Binds 30S ribosomal subunits, but not 50S ribosomal subunits or 70S ribosomes.

The protein resides in the cytoplasm. Functionally, one of several proteins that assist in the late maturation steps of the functional core of the 30S ribosomal subunit. Associates with free 30S ribosomal subunits (but not with 30S subunits that are part of 70S ribosomes or polysomes). Required for efficient processing of 16S rRNA. May interact with the 5'-terminal helix region of 16S rRNA. This chain is Ribosome-binding factor A, found in Lactococcus lactis subsp. cremoris (Streptococcus cremoris).